The chain runs to 273 residues: Dermonecrotic toxin LruSicTox-alphaIC1c (273 aa).

The active site involves His5. Mg(2+)-binding residues include Glu25 and Asp27. His41 serves as the catalytic Nucleophile. 2 disulfides stabilise this stretch: Cys45/Cys51 and Cys47/Cys190. Asp85 contacts Mg(2+).

This sequence belongs to the arthropod phospholipase D family. Class II subfamily. Requires Mg(2+) as cofactor. In terms of tissue distribution, expressed by the venom gland.

The protein localises to the secreted. It carries out the reaction an N-(acyl)-sphingosylphosphocholine = an N-(acyl)-sphingosyl-1,3-cyclic phosphate + choline. The enzyme catalyses an N-(acyl)-sphingosylphosphoethanolamine = an N-(acyl)-sphingosyl-1,3-cyclic phosphate + ethanolamine. The catalysed reaction is a 1-acyl-sn-glycero-3-phosphocholine = a 1-acyl-sn-glycero-2,3-cyclic phosphate + choline. It catalyses the reaction a 1-acyl-sn-glycero-3-phosphoethanolamine = a 1-acyl-sn-glycero-2,3-cyclic phosphate + ethanolamine. In terms of biological role, dermonecrotic toxins cleave the phosphodiester linkage between the phosphate and headgroup of certain phospholipids (sphingolipid and lysolipid substrates), forming an alcohol (often choline) and a cyclic phosphate. This toxin acts on sphingomyelin (SM). It may also act on ceramide phosphoethanolamine (CPE), lysophosphatidylcholine (LPC) and lysophosphatidylethanolamine (LPE), but not on lysophosphatidylserine (LPS), and lysophosphatidylglycerol (LPG). It acts by transphosphatidylation, releasing exclusively cyclic phosphate products as second products. Induces dermonecrosis, hemolysis, increased vascular permeability, edema, inflammatory response, and platelet aggregation. In Loxosceles rufescens (Mediterranean recluse spider), this protein is Dermonecrotic toxin LruSicTox-alphaIC1c.